Reading from the N-terminus, the 218-residue chain is Hypoxanthine-guanine phosphoribosyltransferase (218 aa).

Ala-2 carries the post-translational modification N-acetylalanine. Lys-69 contacts GMP. Lys-103 is subject to N6-acetyllysine. Lys-115 is covalently cross-linked (Glycyl lysine isopeptide (Lys-Gly) (interchain with G-Cter in SUMO1); alternate). A Glycyl lysine isopeptide (Lys-Gly) (interchain with G-Cter in SUMO2); alternate cross-link involves residue Lys-115. GMP contacts are provided by residues 134-142, Lys-166, 186-188, and Asp-194; these read EDIIDTGKT and KFV. Asp-138 serves as the catalytic Proton acceptor. Thr-142 is modified (phosphothreonine). Asp-194 serves as a coordination point for Mg(2+).

The protein belongs to the purine/pyrimidine phosphoribosyltransferase family. Homotetramer. Mg(2+) is required as a cofactor.

Its subcellular location is the cytoplasm. It catalyses the reaction IMP + diphosphate = hypoxanthine + 5-phospho-alpha-D-ribose 1-diphosphate. It carries out the reaction GMP + diphosphate = guanine + 5-phospho-alpha-D-ribose 1-diphosphate. It functions in the pathway purine metabolism; IMP biosynthesis via salvage pathway; IMP from hypoxanthine: step 1/1. Its function is as follows. Converts guanine to guanosine monophosphate, and hypoxanthine to inosine monophosphate. Transfers the 5-phosphoribosyl group from 5-phosphoribosylpyrophosphate onto the purine. Plays a central role in the generation of purine nucleotides through the purine salvage pathway. The chain is Hypoxanthine-guanine phosphoribosyltransferase (HPRT1) from Homo sapiens (Human).